A 231-amino-acid polypeptide reads, in one-letter code: MSVTLALPSKGRLKEKTLAVLEKAGYKVVLPDDDRNYRARVEGEDDLDILFLSASEIARELGYGSVDLGVTGEDLVRETLAHADERVAIEAQLGFGHADVVVAVPEVWRDVTTMADLDDVAADFRQRHGRRLRIATKYWRLTQQFFSQKHGIQVYRIVESLGATEGAPAAGSADMIVDITSTGSTLRANRLKVLEDGIIRRSQACLVSARRSHTSRRVEEIAARIRAGLEI.

This sequence belongs to the ATP phosphoribosyltransferase family. Short subfamily. As to quaternary structure, heteromultimer composed of HisG and HisZ subunits.

The protein localises to the cytoplasm. The catalysed reaction is 1-(5-phospho-beta-D-ribosyl)-ATP + diphosphate = 5-phospho-alpha-D-ribose 1-diphosphate + ATP. It functions in the pathway amino-acid biosynthesis; L-histidine biosynthesis; L-histidine from 5-phospho-alpha-D-ribose 1-diphosphate: step 1/9. Catalyzes the condensation of ATP and 5-phosphoribose 1-diphosphate to form N'-(5'-phosphoribosyl)-ATP (PR-ATP). Has a crucial role in the pathway because the rate of histidine biosynthesis seems to be controlled primarily by regulation of HisG enzymatic activity. The chain is ATP phosphoribosyltransferase from Brucella ovis (strain ATCC 25840 / 63/290 / NCTC 10512).